Reading from the N-terminus, the 261-residue chain is 5'-nucleotidase SurE (261 aa).

4 residues coordinate a divalent metal cation: aspartate 8, aspartate 9, serine 40, and asparagine 94.

Belongs to the SurE nucleotidase family. It depends on a divalent metal cation as a cofactor.

The protein resides in the cytoplasm. The enzyme catalyses a ribonucleoside 5'-phosphate + H2O = a ribonucleoside + phosphate. Functionally, nucleotidase that shows phosphatase activity on nucleoside 5'-monophosphates. The sequence is that of 5'-nucleotidase SurE from Anaplasma marginale (strain Florida).